The sequence spans 120 residues: Large ribosomal subunit protein uL18 (120 aa).

Belongs to the universal ribosomal protein uL18 family. Part of the 50S ribosomal subunit; part of the 5S rRNA/L5/L18/L25 subcomplex. Contacts the 5S and 23S rRNAs.

Functionally, this is one of the proteins that bind and probably mediate the attachment of the 5S RNA into the large ribosomal subunit, where it forms part of the central protuberance. In Brucella abortus (strain S19), this protein is Large ribosomal subunit protein uL18.